Here is a 349-residue protein sequence, read N- to C-terminus: Dihydroorotate dehydrogenase (quinone) (349 aa).

FMN contacts are provided by residues 67 to 71 and Thr-91; that span reads AGLDK. Lys-71 is a binding site for substrate. Residue 116 to 120 participates in substrate binding; the sequence is NRLGF. FMN-binding residues include Asn-147 and Asn-180. Asn-180 contacts substrate. The active-site Nucleophile is Ser-183. Asn-185 contributes to the substrate binding site. FMN-binding residues include Lys-225 and Thr-253. 254–255 is a substrate binding site; that stretch reads NT. Residues Gly-276, Gly-305, and 326 to 327 contribute to the FMN site; that span reads YT.

The protein belongs to the dihydroorotate dehydrogenase family. Type 2 subfamily. As to quaternary structure, monomer. The cofactor is FMN.

The protein resides in the cell membrane. It catalyses the reaction (S)-dihydroorotate + a quinone = orotate + a quinol. It participates in pyrimidine metabolism; UMP biosynthesis via de novo pathway; orotate from (S)-dihydroorotate (quinone route): step 1/1. Functionally, catalyzes the conversion of dihydroorotate to orotate with quinone as electron acceptor. The polypeptide is Dihydroorotate dehydrogenase (quinone) (Bordetella parapertussis (strain 12822 / ATCC BAA-587 / NCTC 13253)).